Here is a 364-residue protein sequence, read N- to C-terminus: MSGLFETLGRRALFTFDAEQAHGLSITGLKTGIVTCRTPEDPALSVKVAGLKFPNPLGMAAGYDKNAEVPDALLKLGFGFAEVGTLTPRPQSGNPRPRIFRLVDDKAVINRLGFNNEGHEAAFKRLSRRAGKSGIVGVNIGANKDAEDRIADYVAGIRRFYQLARYFTVNISSPNTPGLRNLQAREALHELLSRVLEARDEEGNMCTLKRPVFLKIAPDLTDEELDDIAAEADAQKLDGIIVSNTTLSRSGLKNPENSNETGGLSGAPLFERSTVVLARMRERVGPDMPLIGVGGIDSAETALAKIKAGADLVQLYTGLIYRGPGLPGEILRGLSTAIKHEGVSSIAELRDRDTKEWAARKLIS.

Residues 61–65 (AGYDK) and Thr85 contribute to the FMN site. Lys65 serves as a coordination point for substrate. 110–114 (NRLGF) is a substrate binding site. Positions 139 and 170 each coordinate FMN. Asn170 is a binding site for substrate. Ser173 (nucleophile) is an active-site residue. A substrate-binding site is contributed by Asn175. Residues Lys215 and Ser243 each contribute to the FMN site. A substrate-binding site is contributed by 244–245 (NT). FMN-binding positions include Gly266, Gly295, and 316–317 (YT).

It belongs to the dihydroorotate dehydrogenase family. Type 2 subfamily. Monomer. It depends on FMN as a cofactor.

Its subcellular location is the cell membrane. It catalyses the reaction (S)-dihydroorotate + a quinone = orotate + a quinol. It functions in the pathway pyrimidine metabolism; UMP biosynthesis via de novo pathway; orotate from (S)-dihydroorotate (quinone route): step 1/1. In terms of biological role, catalyzes the conversion of dihydroorotate to orotate with quinone as electron acceptor. This is Dihydroorotate dehydrogenase (quinone) from Brucella canis (strain ATCC 23365 / NCTC 10854 / RM-666).